The following is a 389-amino-acid chain: Succinate--CoA ligase [ADP-forming] subunit beta (389 aa).

An ATP-grasp domain is found at 9 to 244 (KQLLAEYGIP…KTQEDPTEVI (236 aa)). ATP contacts are provided by residues Lys-46, 53 to 55 (GRG), Gly-102, and Glu-107. Asn-199 and Asp-213 together coordinate Mg(2+). Residues Asn-264 and 321–323 (GIV) each bind substrate.

This sequence belongs to the succinate/malate CoA ligase beta subunit family. Heterotetramer of two alpha and two beta subunits. Mg(2+) serves as cofactor.

It catalyses the reaction succinate + ATP + CoA = succinyl-CoA + ADP + phosphate. It carries out the reaction GTP + succinate + CoA = succinyl-CoA + GDP + phosphate. It functions in the pathway carbohydrate metabolism; tricarboxylic acid cycle; succinate from succinyl-CoA (ligase route): step 1/1. Its function is as follows. Succinyl-CoA synthetase functions in the citric acid cycle (TCA), coupling the hydrolysis of succinyl-CoA to the synthesis of either ATP or GTP and thus represents the only step of substrate-level phosphorylation in the TCA. The beta subunit provides nucleotide specificity of the enzyme and binds the substrate succinate, while the binding sites for coenzyme A and phosphate are found in the alpha subunit. The sequence is that of Succinate--CoA ligase [ADP-forming] subunit beta from Stenotrophomonas maltophilia (strain R551-3).